Here is a 129-residue protein sequence, read N- to C-terminus: MARKTNTRKKRVKKNIEAGIAHIRSTFNNTIVTLTDTHGNALSWSSAGALGFRGSRKSTPFAAQMAAEAAAKVAMEHGLKTLEVTVKGPGAGREAAIRALQAAGLEVTAIRDVTPVPHNGCRPPKRRRV.

It belongs to the universal ribosomal protein uS11 family. Part of the 30S ribosomal subunit. Interacts with proteins S7 and S18. Binds to IF-3.

Located on the platform of the 30S subunit, it bridges several disparate RNA helices of the 16S rRNA. Forms part of the Shine-Dalgarno cleft in the 70S ribosome. The sequence is that of Small ribosomal subunit protein uS11 from Bacillus cereus (strain G9842).